We begin with the raw amino-acid sequence, 238 residues long: Adenylate dimethylallyltransferase (238 aa).

It belongs to the isopentenyl transferase family.

It carries out the reaction dimethylallyl diphosphate + AMP = N(6)-(dimethylallyl)adenosine 5'-phosphate + diphosphate. Transfers dimethylallyl groups to AMP as part of the biosynthesis of cytokinin phytohormones. The polypeptide is Adenylate dimethylallyltransferase (tzs) (Ralstonia nicotianae (strain ATCC BAA-1114 / GMI1000) (Ralstonia solanacearum)).